The following is a 146-amino-acid chain: Anti-sigma F factor (146 aa).

Belongs to the anti-sigma-factor family.

It catalyses the reaction L-seryl-[protein] + ATP = O-phospho-L-seryl-[protein] + ADP + H(+). It carries out the reaction L-threonyl-[protein] + ATP = O-phospho-L-threonyl-[protein] + ADP + H(+). In terms of biological role, binds to sigma F and blocks its ability to form an RNA polymerase holoenzyme (E-sigma F). Phosphorylates SpoIIAA on a serine residue. This phosphorylation may enable SpoIIAA to act as an anti-anti-sigma factor that counteracts SpoIIAB and thus releases sigma F from inhibition. This chain is Anti-sigma F factor, found in Bacillus anthracis (strain A0248).